The sequence spans 593 residues: A-type ATP synthase subunit A (593 aa).

ATP is bound at residue 236–243 (GPFGSGKT).

This sequence belongs to the ATPase alpha/beta chains family. In terms of assembly, has multiple subunits with at least A(3), B(3), C, D, E, F, H, I and proteolipid K(x).

It localises to the cell membrane. The enzyme catalyses ATP + H2O + 4 H(+)(in) = ADP + phosphate + 5 H(+)(out). Its function is as follows. Component of the A-type ATP synthase that produces ATP from ADP in the presence of a proton gradient across the membrane. The A chain is the catalytic subunit. This Pyrobaculum islandicum (strain DSM 4184 / JCM 9189 / GEO3) protein is A-type ATP synthase subunit A.